Here is a 92-residue protein sequence, read N- to C-terminus: MAKGQSLQDPFLNALRRERVPVSVYLVNGIKLQGTIESFDQFVVLLRNTVSQMVYKHAISTVVPARNVRVGPGGGYVQSNENNQAEDDDVEQ.

Residues 9–68 (DPFLNALRRERVPVSVYLVNGIKLQGTIESFDQFVVLLRNTVSQMVYKHAISTVVPARNV) form the Sm domain. Residues 72 to 92 (PGGGYVQSNENNQAEDDDVEQ) form a disordered region.

This sequence belongs to the Hfq family. Homohexamer.

Functionally, RNA chaperone that binds small regulatory RNA (sRNAs) and mRNAs to facilitate mRNA translational regulation in response to envelope stress, environmental stress and changes in metabolite concentrations. Also binds with high specificity to tRNAs. The chain is RNA-binding protein Hfq from Xanthomonas campestris pv. campestris (strain 8004).